A 382-amino-acid chain; its full sequence is D-galactonate dehydratase (382 aa).

Asp183 contributes to the Mg(2+) binding site. His185 serves as the catalytic Proton donor. The Mg(2+) site is built by Glu209 and Glu235. Residue His285 is the Proton acceptor of the active site.

It belongs to the mandelate racemase/muconate lactonizing enzyme family. GalD subfamily. It depends on Mg(2+) as a cofactor.

It carries out the reaction D-galactonate = 2-dehydro-3-deoxy-D-galactonate + H2O. It participates in carbohydrate acid metabolism; D-galactonate degradation; D-glyceraldehyde 3-phosphate and pyruvate from D-galactonate: step 1/3. In terms of biological role, catalyzes the dehydration of D-galactonate to 2-keto-3-deoxy-D-galactonate. This chain is D-galactonate dehydratase, found in Salmonella dublin (strain CT_02021853).